Consider the following 330-residue polypeptide: D-cysteine desulfhydrase (330 aa).

Lysine 52 carries the N6-(pyridoxal phosphate)lysine modification.

This sequence belongs to the ACC deaminase/D-cysteine desulfhydrase family. Homodimer. Requires pyridoxal 5'-phosphate as cofactor.

The catalysed reaction is D-cysteine + H2O = hydrogen sulfide + pyruvate + NH4(+) + H(+). Catalyzes the alpha,beta-elimination reaction of D-cysteine and of several D-cysteine derivatives. It could be a defense mechanism against D-cysteine. The protein is D-cysteine desulfhydrase of Yersinia pestis.